The chain runs to 431 residues: Probable 3-hydroxy-3-methylglutaryl-coenzyme A reductase (431 aa).

Active-site charge relay system residues include Glu-85 and Asp-278. Catalysis depends on His-375, which acts as the Proton donor.

This sequence belongs to the HMG-CoA reductase family.

It carries out the reaction (R)-mevalonate + 2 NAD(+) + CoA = (3S)-3-hydroxy-3-methylglutaryl-CoA + 2 NADH + 2 H(+). It participates in metabolic intermediate metabolism; (R)-mevalonate degradation; (S)-3-hydroxy-3-methylglutaryl-CoA from (R)-mevalonate: step 1/1. Functionally, converts HMG-CoA to mevalonate. This Borreliella burgdorferi (strain ATCC 35210 / DSM 4680 / CIP 102532 / B31) (Borrelia burgdorferi) protein is Probable 3-hydroxy-3-methylglutaryl-coenzyme A reductase.